The chain runs to 206 residues: Adenylate kinase (206 aa).

Residues 1-21 form a disordered region; the sequence is MSQPKILLLGAPGAGKGTQSS. 13-18 serves as a coordination point for ATP; it reads GAGKGT. Residues 33–61 are NMP; it reads TTGDALRANKDMETEHGTPREFMEAGELV. AMP-binding positions include Thr-34, Arg-39, 59–61, 84–87, and Gln-91; these read ELV and GYPR. Residues 120 to 153 are LID; the sequence is GRRMDPETGDIYHTEFNMPDDEEVRERLVQRDDD. Residues Arg-121 and 130 to 131 contribute to the ATP site; that span reads IY. Positions 150 and 161 each coordinate AMP. Residue Ala-189 coordinates ATP.

Belongs to the adenylate kinase family. In terms of assembly, monomer.

It is found in the cytoplasm. The enzyme catalyses AMP + ATP = 2 ADP. It participates in purine metabolism; AMP biosynthesis via salvage pathway; AMP from ADP: step 1/1. Catalyzes the reversible transfer of the terminal phosphate group between ATP and AMP. Plays an important role in cellular energy homeostasis and in adenine nucleotide metabolism. In Natronomonas pharaonis (strain ATCC 35678 / DSM 2160 / CIP 103997 / JCM 8858 / NBRC 14720 / NCIMB 2260 / Gabara) (Halobacterium pharaonis), this protein is Adenylate kinase.